A 257-amino-acid polypeptide reads, in one-letter code: Phosphate import ATP-binding protein PstB (257 aa).

An ABC transporter domain is found at L5–E246. G37–S44 contributes to the ATP binding site.

It belongs to the ABC transporter superfamily. Phosphate importer (TC 3.A.1.7) family. As to quaternary structure, the complex is composed of two ATP-binding proteins (PstB), two transmembrane proteins (PstC and PstA) and a solute-binding protein (PstS).

Its subcellular location is the cell membrane. It carries out the reaction phosphate(out) + ATP + H2O = ADP + 2 phosphate(in) + H(+). Functionally, part of the ABC transporter complex PstSACB involved in phosphate import. Responsible for energy coupling to the transport system. This Tropheryma whipplei (strain TW08/27) (Whipple's bacillus) protein is Phosphate import ATP-binding protein PstB.